We begin with the raw amino-acid sequence, 100 residues long: Urease subunit gamma (100 aa).

This sequence belongs to the urease gamma subunit family. In terms of assembly, heterotrimer of UreA (gamma), UreB (beta) and UreC (alpha) subunits. Three heterotrimers associate to form the active enzyme.

It is found in the cytoplasm. It catalyses the reaction urea + 2 H2O + H(+) = hydrogencarbonate + 2 NH4(+). It functions in the pathway nitrogen metabolism; urea degradation; CO(2) and NH(3) from urea (urease route): step 1/1. In Actinobacillus pleuropneumoniae serotype 5b (strain L20), this protein is Urease subunit gamma.